Reading from the N-terminus, the 350-residue chain is Small ribosomal subunit biogenesis GTPase RsgA (350 aa).

Positions 1–17 (MSKNKLSKGQQRRVNAN) are enriched in polar residues. Positions 1–33 (MSKNKLSKGQQRRVNANHQRRLKTSKEKPDYDD) are disordered. Residues 104 to 273 (TSVLTRPDFY…VIDSPGVREF (170 aa)) form the CP-type G domain. GTP is bound by residues 160–163 (NKID) and 214–222 (GQSGVGKSS). 4 residues coordinate Zn(2+): cysteine 297, cysteine 302, histidine 304, and cysteine 310.

It belongs to the TRAFAC class YlqF/YawG GTPase family. RsgA subfamily. As to quaternary structure, monomer. Associates with 30S ribosomal subunit, binds 16S rRNA. Requires Zn(2+) as cofactor.

The protein localises to the cytoplasm. In terms of biological role, one of several proteins that assist in the late maturation steps of the functional core of the 30S ribosomal subunit. Helps release RbfA from mature subunits. May play a role in the assembly of ribosomal proteins into the subunit. Circularly permuted GTPase that catalyzes slow GTP hydrolysis, GTPase activity is stimulated by the 30S ribosomal subunit. This Escherichia coli O6:H1 (strain CFT073 / ATCC 700928 / UPEC) protein is Small ribosomal subunit biogenesis GTPase RsgA.